The sequence spans 275 residues: 18S rRNA (guanine(1575)-N(7))-methyltransferase (275 aa).

The disordered stretch occupies residues 256–275; that stretch reads RGRKVAKDSKFTGRKRRHRF. The short motif at 257-264 is the Nuclear localization signal element; that stretch reads GRKVAKDS.

This sequence belongs to the class I-like SAM-binding methyltransferase superfamily. BUD23/WBSCR22 family. Interacts with TRM112. Interacts with ECM16.

The protein resides in the cytoplasm. It is found in the nucleus. It carries out the reaction guanosine(1575) in yeast 18S rRNA + S-adenosyl-L-methionine = N(7)-methylguanosine(1575) in yeast 18S rRNA + S-adenosyl-L-homocysteine. In terms of biological role, S-adenosyl-L-methionine-dependent methyltransferase that specifically methylates the N(7) position of guanine 1575 (m7G1575) in 18S rRNA. Requires the methyltransferase adapter protein TRM112 for full rRNA methyltransferase activity. Important for biogenesis end export of the 40S ribosomal subunit independent on its methyltransferase activity. Required for efficient cleavage of the primary 35S precursor rRNA at site A2. Involved in positioning the proximal bud pole signal. The polypeptide is 18S rRNA (guanine(1575)-N(7))-methyltransferase (BUD23) (Saccharomyces cerevisiae (strain ATCC 204508 / S288c) (Baker's yeast)).